Reading from the N-terminus, the 353-residue chain is Photosystem II protein D1 (353 aa).

Residue Thr2 is modified to N-acetylthreonine. The residue at position 2 (Thr2) is a Phosphothreonine. The next 3 membrane-spanning stretches (helical) occupy residues 29-46 (YIGW…TATS), 118-133 (HFLL…EWEL), and 142-156 (WIAV…AATA). His118 is a binding site for chlorophyll a. Tyr126 contacts pheophytin a. [CaMn4O5] cluster contacts are provided by Asp170 and Glu189. Residues 197–218 (FHMLGVAGVFGGSLFSAMHGSL) traverse the membrane as a helical segment. His198 is a binding site for chlorophyll a. A quinone-binding positions include His215 and 264–265 (SF). A Fe cation-binding site is contributed by His215. Fe cation is bound at residue His272. The chain crosses the membrane as a helical span at residues 274–288 (FLAAWPVVGIWFTAL). Positions 332, 333, 342, and 344 each coordinate [CaMn4O5] cluster. Residues 345-353 (AVEAPSTNG) constitute a propeptide that is removed on maturation.

The protein belongs to the reaction center PufL/M/PsbA/D family. As to quaternary structure, PSII is composed of 1 copy each of membrane proteins PsbA, PsbB, PsbC, PsbD, PsbE, PsbF, PsbH, PsbI, PsbJ, PsbK, PsbL, PsbM, PsbT, PsbX, PsbY, PsbZ, Psb30/Ycf12, at least 3 peripheral proteins of the oxygen-evolving complex and a large number of cofactors. It forms dimeric complexes. Requires The D1/D2 heterodimer binds P680, chlorophylls that are the primary electron donor of PSII, and subsequent electron acceptors. It shares a non-heme iron and each subunit binds pheophytin, quinone, additional chlorophylls, carotenoids and lipids. D1 provides most of the ligands for the Mn4-Ca-O5 cluster of the oxygen-evolving complex (OEC). There is also a Cl(-1) ion associated with D1 and D2, which is required for oxygen evolution. The PSII complex binds additional chlorophylls, carotenoids and specific lipids. as cofactor. In terms of processing, tyr-161 forms a radical intermediate that is referred to as redox-active TyrZ, YZ or Y-Z. C-terminally processed by CTPA; processing is essential to allow assembly of the oxygen-evolving complex and thus photosynthetic growth.

Its subcellular location is the plastid. The protein resides in the chloroplast thylakoid membrane. The catalysed reaction is 2 a plastoquinone + 4 hnu + 2 H2O = 2 a plastoquinol + O2. Its function is as follows. Photosystem II (PSII) is a light-driven water:plastoquinone oxidoreductase that uses light energy to abstract electrons from H(2)O, generating O(2) and a proton gradient subsequently used for ATP formation. It consists of a core antenna complex that captures photons, and an electron transfer chain that converts photonic excitation into a charge separation. The D1/D2 (PsbA/PsbD) reaction center heterodimer binds P680, the primary electron donor of PSII as well as several subsequent electron acceptors. This Oenothera parviflora (Small-flowered evening primrose) protein is Photosystem II protein D1.